A 288-amino-acid polypeptide reads, in one-letter code: Pyridoxal kinase PdxY (288 aa).

Substrate contacts are provided by residues S9 and 44–45; that span reads TQ. ATP contacts are provided by D111, E148, and K181. D224 provides a ligand contact to substrate.

The protein belongs to the pyridoxine kinase family. PdxY subfamily. As to quaternary structure, homodimer. Mg(2+) serves as cofactor.

It carries out the reaction pyridoxal + ATP = pyridoxal 5'-phosphate + ADP + H(+). Its pathway is cofactor metabolism; pyridoxal 5'-phosphate salvage; pyridoxal 5'-phosphate from pyridoxal: step 1/1. Its function is as follows. Pyridoxal kinase involved in the salvage pathway of pyridoxal 5'-phosphate (PLP). Catalyzes the phosphorylation of pyridoxal to PLP. This Haemophilus influenzae (strain PittEE) protein is Pyridoxal kinase PdxY.